Here is a 485-residue protein sequence, read N- to C-terminus: Proline betaine:corrinoid methyltransferase (485 aa).

The protein belongs to the trimethylamine methyltransferase family. As to quaternary structure, the proline betaine:THF methyl transfer system is composed of two methyltransferases, MtpB and MtqA, and the corrinoid protein MtqC.

It carries out the reaction Co(I)-[quaternary-amine-specific corrinoid protein] + L-proline betaine + H(+) = methyl-Co(III)-[quaternary-amine-specific corrinoid protein] + N-methyl-L-proline. Its function is as follows. Involved in the degradation of the quaternary amine L-proline betaine. Component of a corrinoid-dependent methyltransferase system that transfers a methyl group from L-proline betaine to tetrahydrofolate (THF), forming methyl-THF, a key intermediate in the Wood-Ljungdahl acetogenesis pathway. MtpB catalyzes the methylation of the corrinoid protein MtqC, using L-proline betaine as the methyl donor. Shows weak activity with some other quaternary amines, including carnitine, phosphocholine, glycine betaine or betonicine, but cannot methylate free cob(I)alamin. In Eubacterium limosum, this protein is Proline betaine:corrinoid methyltransferase.